The chain runs to 215 residues: Nucleoredoxin-like protein 1 (215 aa).

The Thioredoxin; atypical domain maps to 1–165 (MADLFLDKIL…VSEIIDRSFL (165 aa)). A compositionally biased stretch (basic and acidic residues) spans 185 to 194 (IKYKDETTNE). The interval 185–215 (IKYKDETTNEKKKRKHCDDEDEGGGGGTEFF) is disordered.

Belongs to the nucleoredoxin family.

The protein localises to the cell projection. Its subcellular location is the cilium. It localises to the photoreceptor outer segment. In terms of biological role, plays an important role in retinal cone photoreceptor survival. May play a role in cone cell viability, slowing down cone degeneration, does not seem to play a role in degenerating rods. This Xenopus laevis (African clawed frog) protein is Nucleoredoxin-like protein 1 (nxnl1).